A 116-amino-acid polypeptide reads, in one-letter code: Flagellar transcriptional regulator FlhD (116 aa).

It belongs to the FlhD family. Homodimer; disulfide-linked. Forms a heterohexamer composed of two FlhC and four FlhD subunits. Each FlhC binds a FlhD dimer, forming a heterotrimer, and a hexamer assembles by dimerization of two heterotrimers.

The protein localises to the cytoplasm. Its function is as follows. Functions in complex with FlhC as a master transcriptional regulator that regulates transcription of several flagellar and non-flagellar operons by binding to their promoter region. Activates expression of class 2 flagellar genes, including fliA, which is a flagellum-specific sigma factor that turns on the class 3 genes. Also regulates genes whose products function in a variety of physiological pathways. The sequence is that of Flagellar transcriptional regulator FlhD from Enterobacter sp. (strain 22).